The following is a 242-amino-acid chain: Zinc import ATP-binding protein ZnuC (242 aa).

An ABC transporter domain is found at 24–241; sequence INVENLSFFY…EKFLKMFSSY (218 aa). 56 to 63 provides a ligand contact to ATP; it reads GPNGGGKT.

It belongs to the ABC transporter superfamily. Zinc importer (TC 3.A.1.15.5) family. As to quaternary structure, the complex is composed of two ATP-binding proteins (ZnuC), two transmembrane proteins (ZnuB) and a solute-binding protein (ZnuA).

The protein resides in the cell inner membrane. The enzyme catalyses Zn(2+)(out) + ATP(in) + H2O(in) = Zn(2+)(in) + ADP(in) + phosphate(in) + H(+)(in). Part of the ABC transporter complex ZnuABC involved in zinc import. Responsible for energy coupling to the transport system. In Ehrlichia chaffeensis (strain ATCC CRL-10679 / Arkansas), this protein is Zinc import ATP-binding protein ZnuC.